Reading from the N-terminus, the 481-residue chain is Probable cytosol aminopeptidase (481 aa).

Residues K247 and D252 each coordinate Mn(2+). The active site involves K259. Residues D270, D329, and E331 each contribute to the Mn(2+) site. Residue R333 is part of the active site.

This sequence belongs to the peptidase M17 family. The cofactor is Mn(2+).

It is found in the cytoplasm. It carries out the reaction Release of an N-terminal amino acid, Xaa-|-Yaa-, in which Xaa is preferably Leu, but may be other amino acids including Pro although not Arg or Lys, and Yaa may be Pro. Amino acid amides and methyl esters are also readily hydrolyzed, but rates on arylamides are exceedingly low.. The catalysed reaction is Release of an N-terminal amino acid, preferentially leucine, but not glutamic or aspartic acids.. In terms of biological role, presumably involved in the processing and regular turnover of intracellular proteins. Catalyzes the removal of unsubstituted N-terminal amino acids from various peptides. The protein is Probable cytosol aminopeptidase of Clostridium tetani (strain Massachusetts / E88).